Here is a 262-residue protein sequence, read N- to C-terminus: Small ribosomal subunit protein uS2 (262 aa).

It belongs to the universal ribosomal protein uS2 family.

The protein is Small ribosomal subunit protein uS2 of Azobacteroides pseudotrichonymphae genomovar. CFP2.